The primary structure comprises 599 residues: Nucleosomal histone kinase 1 (599 aa).

The Protein kinase domain maps to 47–328 (WRIGPSIGVG…PDYDKCRSWF (282 aa)). ATP is bound by residues 53–61 (IGVGGFGEI) and Lys-77. The active-site Proton acceptor is Asp-183. 2 disordered regions span residues 340-507 (NGDL…PQPR) and 532-599 (RKKK…KYQG). The span at 349–361 (PQTSSNNNLSPPG) shows a compositional bias: polar residues. Phosphoserine occurs at positions 376, 381, 382, 388, and 390. Basic and acidic residues predominate over residues 435-448 (VKTEPKSTPRERAT). Residue Ser-483 is modified to Phosphoserine. A compositionally biased stretch (low complexity) spans 546-558 (SRTPSSRSALASS). Ser-564 and Ser-586 each carry phosphoserine. Phosphothreonine is present on Thr-589.

This sequence belongs to the protein kinase superfamily. CK1 Ser/Thr protein kinase family. VRK subfamily. In terms of assembly, may interact with Unc-89 (via protein kinase domain 1). Interacts with L(2)gl. The cofactor is Mg(2+). Post-translationally, phosphorylated during mitosis and female meiosis. In terms of tissue distribution, expressed in ovaries (at protein level). Expressed in indirect flight muscle (IFM) (at protein level).

The protein localises to the cytoplasm. Its subcellular location is the nucleus. The protein resides in the chromosome. It localises to the myofibril. It is found in the sarcomere. The protein localises to the z line. Its subcellular location is the m line. The enzyme catalyses L-seryl-[protein] + ATP = O-phospho-L-seryl-[protein] + ADP + H(+). It carries out the reaction L-threonyl-[protein] + ATP = O-phospho-L-threonyl-[protein] + ADP + H(+). Its function is as follows. Serine/threonine-protein kinase involved in somatic mitosis and female meiosis. Required for spindle organization in mitosis, and for the establishment or maintenance of meiosis-specific chromosomal configurations, including the prophase I karyosome and the metaphase I spindle. Specifically phosphorylates nucleosomal H2A on 'Thr-119'. Required for the development and organization of indirect flight muscle sarcomeres by regulating the formation of M line and H zone and the correct assembly of thick and thin filaments in the sarcomere. The protein is Nucleosomal histone kinase 1 (ball) of Drosophila melanogaster (Fruit fly).